Reading from the N-terminus, the 927-residue chain is Sodium/calcium exchanger 3 (927 aa).

The first 30 residues, 1-30 (MAWLRLQPLTSAFLHFGLVTFVLFLNGLRA), serve as a signal peptide directing secretion. At 31–73 (EAGGSGDVPSTGQNNESCSGSSDCKEGVILPIWYPENPSLGDK) the chain is on the extracellular side. N-linked (GlcNAc...) asparagine glycosylation occurs at N45. A helical membrane pass occupies residues 74 to 94 (IARVIVYFVALIYMFLGVSII). Topologically, residues 95–147 (ADRFMASIEVITSQEREVTIKKPNGETSTTTIRVWNETVSNLTLMALGSSAPE) are cytoplasmic. The Alpha-1 repeat unit spans residues 140 to 180 (ALGSSAPEILLSLIEVCGHGFIAGDLGPSTIVGSAAFNMFI). Residues 148–168 (ILLSLIEVCGHGFIAGDLGPS) form a helical membrane-spanning segment. A topological domain (extracellular) is located at residue T169. Residues 170-190 (IVGSAAFNMFIIIGICVYVIP) form a helical membrane-spanning segment. Topologically, residues 191–202 (DGETRKIKHLRV) are cytoplasmic. The chain crosses the membrane as a helical span at residues 203 to 223 (FFITAAWSIFAYIWLYMILAV). Residues 224–230 (FSPGVVQ) are Extracellular-facing. A helical membrane pass occupies residues 231–251 (VWEGLLTLFFFPVCVLLAWVA). The Cytoplasmic segment spans residues 252–726 (DKRLLFYKYM…DESGEERLPS (475 aa)). The interval 253 to 272 (KRLLFYKYMHKKYRTDKHRG) is putative calmodulin-binding region. 2 consecutive Calx-beta domains span residues 386 to 485 (VHTD…VRLS) and 519 to 619 (ATVT…IALG). Ca(2+) is bound by residues E409, D445, D470, D471, I473, E475, E478, D525, D526, D527, E543, D579, E606, E607, and E672. Residues 727 to 747 (CFDYVMHFLTVFWKVLFACVP) traverse the membrane as a helical segment. At 748–754 (PTEYCHG) the chain is on the extracellular side. A helical transmembrane segment spans residues 755–775 (WACFAVSILIIGMLTAIIGDL). At 776-778 (ASH) the chain is on the cytoplasmic side. The chain crosses the membrane as a helical span at residues 779-799 (FGCTIGLKDSVTAVVFVAFGT). An Alpha-2 repeat occupies 796–832 (AFGTSVPDTFASKAAALQDVYADASIGNVTGSNAVNV). The Extracellular portion of the chain corresponds to 800–828 (SVPDTFASKAAALQDVYADASIGNVTGSN). N-linked (GlcNAc...) asparagine glycosylation occurs at N823. The chain crosses the membrane as a helical span at residues 829–849 (AVNVFLGIGLAWSVAAIYWAL). The Cytoplasmic segment spans residues 850 to 860 (QGQEFHVSAGT). A helical transmembrane segment spans residues 861–881 (LAFSVTLFTIFAFVCISVLLY). At 882–903 (RRRPHLGGELGGPRGCKLATTW) the chain is on the extracellular side. Residues 904 to 924 (LFVSLWLLYILFATLEAYCYI) form a helical membrane-spanning segment. The Cytoplasmic segment spans residues 925-927 (KGF).

It belongs to the Ca(2+):cation antiporter (CaCA) (TC 2.A.19) family. SLC8 subfamily. As to quaternary structure, interacts with AKAP1. Isoform 2 is expressed in brain and skeletal muscle. Isoform 3 is expressed in excitable cells of brain, retina and skeletal muscle. Isoform 4 is expressed in skeletal muscle.

The protein localises to the cell membrane. It localises to the perikaryon. Its subcellular location is the cell projection. It is found in the dendrite. The protein resides in the dendritic spine. The protein localises to the sarcolemma. It localises to the cytoplasm. Its subcellular location is the sarcoplasm. It is found in the cell junction. The protein resides in the mitochondrion outer membrane. The protein localises to the perinuclear region. It localises to the endoplasmic reticulum membrane. It carries out the reaction Ca(2+)(in) + 3 Na(+)(out) = Ca(2+)(out) + 3 Na(+)(in). Its activity is regulated as follows. Calcium transport is down-regulated by Na(+) and stimulated by Ca(2+). Its function is as follows. Mediates the electrogenic exchange of Ca(2+) against Na(+) ions across the cell membrane, and thereby contributes to the regulation of cytoplasmic Ca(2+) levels and Ca(2+)-dependent cellular processes. Contributes to cellular Ca(2+) homeostasis in excitable cells, both in muscle and in brain. In a first phase, voltage-gated channels mediate the rapid increase of cytoplasmic Ca(2+) levels due to release of Ca(2+) stores from the endoplasmic reticulum. SLC8A3 mediates the export of Ca(2+) from the cell during the next phase, so that cytoplasmic Ca(2+) levels rapidly return to baseline. Contributes to Ca(2+) transport during excitation-contraction coupling in muscle. In neurons, contributes to the rapid decrease of cytoplasmic Ca(2+) levels back to baseline after neuronal activation, and thereby contributes to modulate synaptic plasticity, learning and memory. Required for normal oligodendrocyte differentiation and for normal myelination. Mediates Ca(2+) efflux from mitochondria and contributes to mitochondrial Ca(2+) ion homeostasis. In Homo sapiens (Human), this protein is Sodium/calcium exchanger 3 (SLC8A3).